Here is a 1160-residue protein sequence, read N- to C-terminus: DNA polymerase III subunit alpha (1160 aa).

The protein belongs to the DNA polymerase type-C family. DnaE subfamily. As to quaternary structure, the DNA polymerase III holoenzyme complex contains at least 10 different subunits organized into 3 functionally essential subassemblies: the Pol III core, the beta sliding clamp processivity factor and the clamp-loading complex. The Pol III core (subunits alpha, epsilon and theta) contains the polymerase and the 3'-5' exonuclease proofreading activities. The polymerase is tethered to the template via the dimeric beta sliding clamp processivity factor. The clamp loader (also called gamma complex) assembles the beta sliding clamp onto the primed template and plays a central role in the organization and communication at the replication fork. The clamp-loading complex contains delta, delta', psi and chi, and 3 copies of either or both of two different DnaX proteins, gamma and tau. The DNA replisome complex has a single clamp loader (3 tau and 1 each of delta, delta', psi and chi subunits) which binds 3 Pol III cores (1 core on the leading strand and 2 on the lagging strand) each with a beta sliding clamp dimer. Additional proteins in the replisome are other copies of gamma, psi and chi, Ssb, DNA helicase and RNA primase. Interacts with the beta sliding-clamp subunit via the peptide Gln-Ala-Asp-Met-Phe (residues 920-924).

It localises to the cytoplasm. It carries out the reaction DNA(n) + a 2'-deoxyribonucleoside 5'-triphosphate = DNA(n+1) + diphosphate. In terms of biological role, DNA polymerase III is a complex, multichain enzyme responsible for most of the replicative synthesis in bacteria. This DNA polymerase also exhibits 3' to 5' exonuclease activity. The alpha chain is the DNA polymerase catalytic subunit. It is tethered to replicating DNA by the beta sliding clamp (dnaN), which confers extremely high processivity to the catalytic subunit, copying a 5.4 kb genome in 11 seconds, a speed of at least 500 nucleotides/second at 30 degrees Celsius. The protein is DNA polymerase III subunit alpha (dnaE) of Escherichia coli (strain K12).